Here is a 281-residue protein sequence, read N- to C-terminus: NADPH-dependent 7-cyano-7-deazaguanine reductase (281 aa).

88–90 (IES) provides a ligand contact to substrate. Position 90 to 91 (90 to 91 (SK)) interacts with NADPH. The Thioimide intermediate role is filled by Cys189. The active-site Proton donor is Asp196. 228-229 (HE) is a binding site for substrate. An NADPH-binding site is contributed by 257 to 258 (RG).

It belongs to the GTP cyclohydrolase I family. QueF type 2 subfamily. Homodimer.

It is found in the cytoplasm. The catalysed reaction is 7-aminomethyl-7-carbaguanine + 2 NADP(+) = 7-cyano-7-deazaguanine + 2 NADPH + 3 H(+). Its pathway is tRNA modification; tRNA-queuosine biosynthesis. Its function is as follows. Catalyzes the NADPH-dependent reduction of 7-cyano-7-deazaguanine (preQ0) to 7-aminomethyl-7-deazaguanine (preQ1). The sequence is that of NADPH-dependent 7-cyano-7-deazaguanine reductase from Erwinia tasmaniensis (strain DSM 17950 / CFBP 7177 / CIP 109463 / NCPPB 4357 / Et1/99).